We begin with the raw amino-acid sequence, 354 residues long: Protein Wnt-11 (354 aa).

A signal peptide spans 1 to 24 (MRARPQVCEALLFALALHTGVCYG). N-linked (GlcNAc...) asparagine glycosylation is found at N40 and N90. 3 disulfide bridges follow: C80–C91, C130–C138, and C140–C157. N-linked (GlcNAc...) asparagine glycosylation occurs at N160. Disulfide bonds link C209–C223, C211–C218, C283–C314, C299–C309, C313–C353, C329–C344, C331–C341, and C336–C337. The O-palmitoleoyl serine; by PORCN moiety is linked to residue S215. N300 and N304 each carry an N-linked (GlcNAc...) asparagine glycan.

Belongs to the Wnt family. Palmitoleoylation is required for efficient binding to frizzled receptors. Depalmitoleoylation leads to Wnt signaling pathway inhibition.

The protein resides in the secreted. The protein localises to the extracellular space. Its subcellular location is the extracellular matrix. Functionally, ligand for members of the frizzled family of seven transmembrane receptors. Probable developmental protein. May be a signaling molecule which affects the development of discrete regions of tissues. Is likely to signal over only few cell diameters. The protein is Protein Wnt-11 (Wnt11) of Mus musculus (Mouse).